The primary structure comprises 452 residues: UPF0210 protein Daud_1353 (452 aa).

This sequence belongs to the UPF0210 family. As to quaternary structure, homodimer.

The sequence is that of UPF0210 protein Daud_1353 from Desulforudis audaxviator (strain MP104C).